Consider the following 1280-residue polypeptide: Pullulanase A (1280 aa).

Positions 1–44 are cleaved as a signal peptide; the sequence is MRKTPSHTEKKMVYSIRSLKNGTGSVLIGASLVLLAMATPTISS. A disordered region spans residues 42–132; it reads ISSDESTPTT…VTTETKAEEP (91 aa). Low complexity predominate over residues 48–61; the sequence is TPTTNEPNNRNTTT. A compositionally biased stretch (polar residues) spans 79-90; sequence DISSPGNANASL. Positions 115–126 are enriched in low complexity; sequence EPTTSTSPVTTE. Substrate contacts are provided by residues 156–158, tryptophan 168, aspartate 214, 263–265, tryptophan 276, lysine 318, and asparagine 323; these read WTW and WYW. Serine 661 and tyrosine 663 together coordinate Ca(2+). Residues 667–668 and phenylalanine 743 contribute to the substrate site; that span reads YD. Aspartate 778 acts as the Nucleophile in catalysis. Glutamate 807 serves as the catalytic Proton donor. Residue tryptophan 809 coordinates substrate. Positions 828, 831, and 832 each coordinate Ca(2+). 3 residues coordinate substrate: aspartate 839, arginine 842, and tyrosine 849. 2 residues coordinate Ca(2+): aspartate 882 and aspartate 886. Substrate contacts are provided by residues asparagine 896, lysine 969, and 989-991; that span reads DSY. Aspartate 992 provides a ligand contact to Ca(2+). A disordered region spans residues 1140–1248; it reads VSQNGTSHES…TPDKQAELPN (109 aa). Residues 1149-1196 are compositionally biased toward basic and acidic residues; that stretch reads STAEEKPDSTPSKPEHQNEASHPAHQDPAPEARPDSTKPDAKVADAEN. Over residues 1205–1218 the composition is skewed to low complexity; sequence SQAEQPAQEAQASS. The short motif at 1246–1250 is the LPXTG sorting signal element; it reads LPNTG. Position 1249 is a pentaglycyl murein peptidoglycan amidated threonine (threonine 1249). Residues 1250-1280 constitute a propeptide, removed by sortase; the sequence is GIKNENKLLFAGISLLALLGLGFLLKNKKEN.

It belongs to the glycosyl hydrolase 13 family.

It localises to the secreted. The protein resides in the cell wall. It is found in the cell surface. It catalyses the reaction Hydrolysis of (1-&gt;6)-alpha-D-glucosidic linkages in pullulan, amylopectin and glycogen, and in the alpha- and beta-limit dextrins of amylopectin and glycogen.. Inhibited by 4-O-alpha-D-glucopyranosylmoranoline (G1M). Functionally, virulence factor. Involved in the degradation of glycogen of the mammalian host cells. Hydrolyzes the alpha-1,6-branchpoints of glycogen. Hydrolyzes pullulan. Does not hydrolyze dextran. Binds to mouse lung alveolar type II cells that are rich in glycogen stores. Is an alpha-glucan-specific carbohydrate-binding protein, which binds to amylose (pure alpha-(1,4)-linked glucose), amylopectin (alpha-(1,4)-linked glucose with alpha-(1,6) branch points), pullulan (linear polymer of mixed alpha-(1,4)- and alpha-(1,6)-linked glucose) and glycogen (similar to amylopectin with more frequent alpha-(1,6) branch points) in vitro. Does not bind to dextran (a linear polymer of alpha-(1,6)-linked glucose). This is Pullulanase A from Streptococcus pneumoniae serotype 4 (strain ATCC BAA-334 / TIGR4).